A 445-amino-acid polypeptide reads, in one-letter code: Methylphloroacetophenone oxidase (445 aa).

Residues 25 to 45 (VLSIALIGVACAISIRSILYV) traverse the membrane as a helical segment. N51 is a glycosylation site (N-linked (GlcNAc...) asparagine).

The protein belongs to the cytochrome P450 family.

It localises to the membrane. It functions in the pathway secondary metabolite biosynthesis. Methylphloroacetophenone oxidase; part of the gene cluster that mediates the biosynthesis of usnic acid, a dibenzofuran lichen product possessing a broad spectrum of biological activities. Two genes, mpas and mpao, comprise the usnic acid biosynthetic gene cluster with a single post-PKS enzyme, the methylphloracetophenone oxidase (mpao). The methylphloroacetophenone synthase (mpas) is a non-reducing polyketide synthase that produces methylphloracetophenone from acetate via a methylated tetraketide intermediate. The methylphloroacetophenone oxidase then carries out the oxidative dimerization of methylphloracetophenone to usnic acid. The protein is Methylphloroacetophenone oxidase of Cladonia uncialis (Cup lichen).